We begin with the raw amino-acid sequence, 158 residues long: MGRFIFVSFGLLVVFLSLSGAKGNNCPQDWLPMNGLCYKIFDELKAWKDAEMFCRKYKPGCHLASFHLYGESPEIAEYISDYHKGQSEVWIGLWDKKKDFSWEWTDRSCTDYLSWDKNQPDHYQNKEFCVELVSDTGYRLWNDQVCESKNAFLCQCKF.

An N-terminal signal peptide occupies residues Met1 to Gly23. 4 disulfides stabilise this stretch: Cys26–Cys37, Cys54–Cys154, Cys61–Cys156, and Cys129–Cys146. Residues Met33 to Gln155 enclose the C-type lectin domain. Residues Gln119, Asp121, Glu127, Asn142, and Asp143 each coordinate Ca(2+). The Galactose-binding signature appears at Gln119–Asp121.

In terms of assembly, homodimer; disulfide-linked. Expressed by the venom gland.

It is found in the secreted. Its function is as follows. Lectin with a hemagglutinating activity that is inhibited by galactose, lactose and EDTA. Is calcium-dependent. Shows effects on the renal function of isolated perfused rat kidneys by increasing both perfusion pressure (PP) and renal vascular resistance (RVR). In addition, the urinary flow and glomerular filtration rate (GFR) decreases significantly. The changes observed may reflect direct injury to the glomerular and tubular renal cells, and the rise in permeability in the glomerular endothelial cells, may be the effect of interactions of C-type lectin with endothelial cells or due to release of other mediators by mesangial, tubular and endothelial cells. The chain is C-type lectin BiL from Bothrops insularis (Golden lancehead).